A 611-amino-acid chain; its full sequence is MAU2 chromatid cohesion factor homolog (611 aa).

5 TPR repeats span residues 11–46, 91–124, 131–164, 371–404, and 490–523; these read YAGL…NPPP, FEAS…TSGE, FRLF…AEQC, PILH…ADNP, and ACSL…SGKI. A disordered region spans residues 581-611; it reads WTGAVSPTKSSTIPPQQSFQTWSQPGPSRLS. Positions 585 to 611 are enriched in polar residues; sequence VSPTKSSTIPPQQSFQTWSQPGPSRLS.

It belongs to the SCC4/mau-2 family. Component of the cohesin loading complex.

It is found in the nucleus. The protein resides in the nucleoplasm. In terms of biological role, required for association of the cohesin complex with chromatin during interphase. Plays a role in sister chromatid cohesion and normal progression through prometaphase. This is MAU2 chromatid cohesion factor homolog from Nematostella vectensis (Starlet sea anemone).